The primary structure comprises 138 residues: Type II secretion system protein I (138 aa).

Positions 1 to 6 are cleaved as a propeptide — leader sequence; the sequence is MKHQRG. Tyrosine 7 carries the post-translational modification N-methyltyrosine. The helical transmembrane segment at 7–29 threads the bilayer; that stretch reads YSLIEVIVAFALLALALTLLLGS.

It belongs to the GSP I family. As to quaternary structure, type II secretion is composed of four main components: the outer membrane complex, the inner membrane complex, the cytoplasmic secretion ATPase and the periplasm-spanning pseudopilus. Interacts with core component XpsG. Post-translationally, cleaved by prepilin peptidase. Methylated by prepilin peptidase at the amino group of the N-terminal tyrosine once the leader sequence is cleaved by prepilin peptidase.

Its subcellular location is the cell inner membrane. Functionally, component of the type II secretion system required for the energy-dependent secretion of extracellular factors such as proteases and toxins from the periplasm. Part of the pseudopilus tip complex that is critical for the recognition and binding of secretion substrates. In Xanthomonas campestris pv. campestris (strain ATCC 33913 / DSM 3586 / NCPPB 528 / LMG 568 / P 25), this protein is Type II secretion system protein I (xpsI).